Consider the following 353-residue polypeptide: G-protein coupled estrogen receptor 1 (353 aa).

The Extracellular portion of the chain corresponds to 1 to 40 (MEEQTTNVIQIYVNGTEQFNASFDFNITDVKESTDTYEFY). A helical transmembrane segment spans residues 41–61 (IIGLFLSCLYTIFLFPIGFIG). Residues 62-81 (NILILVVNLNHRERMTIPDL) are Cytoplasmic-facing. Residues 82 to 102 (YFVNLAVADLILVADSLIEVF) traverse the membrane as a helical segment. At 103 to 112 (NLNEKYYDYA) the chain is on the extracellular side. A helical transmembrane segment spans residues 113–133 (VLCTFMSLFLQVNMYSSIFFL). Cys-115 and Cys-192 are disulfide-bonded. The Cytoplasmic segment spans residues 134–160 (TWMSFDRYVALTSSMSSSPLRTMQHAK). The chain crosses the membrane as a helical span at residues 161-181 (LSCSLIWMASILATLLPFTIV). Over 182 to 202 (QTQHTGEVHFCFANVFEIQWL) the chain is Extracellular. The helical transmembrane segment at 203-223 (EVTIGFLIPFSIIGLCYSLIV) threads the bilayer. Over 224–245 (RTLMRAQKHKGLWPRRQKALRM) the chain is Cytoplasmic. A helical transmembrane segment spans residues 246–266 (IVVVVLVFFICWLPENVFISI). At 267–292 (QLLQGTADPSKRTDTTLWHDYPLTGH) the chain is on the extracellular side. The chain crosses the membrane as a helical span at residues 293–313 (IVNLAAFSNSCLNPIIYSFLG). Residues 314–353 (ETFRDKLRLFIKRKASWSVVYRFCNHTLDLQIPVRSESEV) lie on the Cytoplasmic side of the membrane.

It belongs to the G-protein coupled receptor 1 family. Homodimer. Heterodimer. As to expression, expressed in brain regions that are known to control reproduction and sex behavior. Expressed in ovary, muscle and intestine. Expressed in early germ cells of the testis, including the spermatogonia, spermatocytes, and somatic cells such as Sertoli cells.

It is found in the nucleus. The protein resides in the cytoplasm. The protein localises to the perinuclear region. Its subcellular location is the cytoskeleton. It localises to the cytoplasmic vesicle membrane. It is found in the cell membrane. The protein resides in the basolateral cell membrane. The protein localises to the endoplasmic reticulum membrane. Its subcellular location is the early endosome. It localises to the recycling endosome. It is found in the golgi apparatus. The protein resides in the trans-Golgi network. The protein localises to the golgi apparatus membrane. Its subcellular location is the cell projection. It localises to the dendrite. It is found in the dendritic spine membrane. The protein resides in the axon. The protein localises to the postsynaptic density. Its subcellular location is the mitochondrion membrane. In terms of biological role, membrane G-protein coupled estrogen receptor that binds to 17-beta-estradiol (E2) with high affinity, leading to rapid and transient activation of numerous intracellular signaling pathways. Plays a role in the embryonic development of sensory and motor neurons. Specifically induces apoptosis and reduces proliferation of brain cells. Involved in maintenance of meiotic arrest in oocytes. In Danio rerio (Zebrafish), this protein is G-protein coupled estrogen receptor 1 (gper1).